Reading from the N-terminus, the 110-residue chain is Large ribosomal subunit protein uL22 (110 aa).

Belongs to the universal ribosomal protein uL22 family. Part of the 50S ribosomal subunit.

Its function is as follows. This protein binds specifically to 23S rRNA; its binding is stimulated by other ribosomal proteins, e.g. L4, L17, and L20. It is important during the early stages of 50S assembly. It makes multiple contacts with different domains of the 23S rRNA in the assembled 50S subunit and ribosome. Functionally, the globular domain of the protein is located near the polypeptide exit tunnel on the outside of the subunit, while an extended beta-hairpin is found that lines the wall of the exit tunnel in the center of the 70S ribosome. The polypeptide is Large ribosomal subunit protein uL22 (Pseudoalteromonas atlantica (strain T6c / ATCC BAA-1087)).